The sequence spans 154 residues: 6,7-dimethyl-8-ribityllumazine synthase (154 aa).

5-amino-6-(D-ribitylamino)uracil is bound by residues Phe-26, 60-62 (ALE), and 84-86 (CII). Residue 89-90 (QT) participates in (2S)-2-hydroxy-3-oxobutyl phosphate binding. Residue His-92 is the Proton donor of the active site. Asn-117 provides a ligand contact to 5-amino-6-(D-ribitylamino)uracil. Arg-131 is a (2S)-2-hydroxy-3-oxobutyl phosphate binding site.

It belongs to the DMRL synthase family.

It carries out the reaction (2S)-2-hydroxy-3-oxobutyl phosphate + 5-amino-6-(D-ribitylamino)uracil = 6,7-dimethyl-8-(1-D-ribityl)lumazine + phosphate + 2 H2O + H(+). It functions in the pathway cofactor biosynthesis; riboflavin biosynthesis; riboflavin from 2-hydroxy-3-oxobutyl phosphate and 5-amino-6-(D-ribitylamino)uracil: step 1/2. Functionally, catalyzes the formation of 6,7-dimethyl-8-ribityllumazine by condensation of 5-amino-6-(D-ribitylamino)uracil with 3,4-dihydroxy-2-butanone 4-phosphate. This is the penultimate step in the biosynthesis of riboflavin. The polypeptide is 6,7-dimethyl-8-ribityllumazine synthase (Verminephrobacter eiseniae (strain EF01-2)).